Consider the following 532-residue polypeptide: Glutamate--cysteine ligase (532 aa).

This sequence belongs to the glutamate--cysteine ligase type 1 family. Type 1 subfamily.

It catalyses the reaction L-cysteine + L-glutamate + ATP = gamma-L-glutamyl-L-cysteine + ADP + phosphate + H(+). It participates in sulfur metabolism; glutathione biosynthesis; glutathione from L-cysteine and L-glutamate: step 1/2. This is Glutamate--cysteine ligase from Pseudomonas fluorescens (strain Pf0-1).